Here is a 33-residue protein sequence, read N- to C-terminus: DELTA-pseudomyrmecitoxin-Pp1a subunit B (33 aa).

In terms of assembly, heterodimer composed of subunit A and subunit B (DELTA-PSDTX-Pp1a); disulfide-linked. As to expression, expressed by the venom gland.

Its subcellular location is the secreted. Functionally, this heterodimer has insecticidal and cytotoxic properties. Induces immediate paralysis when injected into blowflies (Lucilia cuprina), and then death within 24 hours. Also inhibits the growth of Aedes albopictus mosquito C6/36 cells. The sequence is that of DELTA-pseudomyrmecitoxin-Pp1a subunit B from Pseudomyrmex penetrator (Ant).